The chain runs to 545 residues: CTP synthase (545 aa).

The amidoligase domain stretch occupies residues 1 to 266 (MTTNYIFVTG…DDYICKRFSL (266 aa)). Position 14 (S14) interacts with CTP. S14 lines the UTP pocket. Residues 15 to 20 (SLGKGI) and D72 contribute to the ATP site. Mg(2+) is bound by residues D72 and E140. CTP is bound by residues 147-149 (DIE), 187-192 (KTKPTQ), and K223. UTP-binding positions include 187 to 192 (KTKPTQ) and K223. Residue 239-241 (KDV) participates in ATP binding. A Glutamine amidotransferase type-1 domain is found at 291–542 (TIGMVGKYIE…VKAASEHQKR (252 aa)). Residue G352 participates in L-glutamine binding. Residue C379 is the Nucleophile; for glutamine hydrolysis of the active site. L-glutamine is bound by residues 380–383 (LGMQ), E403, and R470. Active-site residues include H515 and E517.

Belongs to the CTP synthase family. Homotetramer.

It catalyses the reaction UTP + L-glutamine + ATP + H2O = CTP + L-glutamate + ADP + phosphate + 2 H(+). The enzyme catalyses L-glutamine + H2O = L-glutamate + NH4(+). The catalysed reaction is UTP + NH4(+) + ATP = CTP + ADP + phosphate + 2 H(+). It participates in pyrimidine metabolism; CTP biosynthesis via de novo pathway; CTP from UDP: step 2/2. Its activity is regulated as follows. Allosterically activated by GTP, when glutamine is the substrate; GTP has no effect on the reaction when ammonia is the substrate. The allosteric effector GTP functions by stabilizing the protein conformation that binds the tetrahedral intermediate(s) formed during glutamine hydrolysis. Inhibited by the product CTP, via allosteric rather than competitive inhibition. Its function is as follows. Catalyzes the ATP-dependent amination of UTP to CTP with either L-glutamine or ammonia as the source of nitrogen. Regulates intracellular CTP levels through interactions with the four ribonucleotide triphosphates. This is CTP synthase from Salmonella arizonae (strain ATCC BAA-731 / CDC346-86 / RSK2980).